The sequence spans 1384 residues: MREALFSQDGWGCQHVNQDTNWEVPSSPEPANKDAPGPPMWKPSINNGTDLWESNLRNGGQPAAQQVPKPSWGHTPSSNLGGTWGEDDDGADSSSVWTGGAVSNAGSGAAVGVNQAGVNVGPGGVVSSGGPQWGQGVVGVGLGSTGGNGSSNITGSSGVATGSSGNSSNAGNGWGDPREIRPLGVGGSMDIRNVEHRGGNGSGATSSDPRDIRMIDPRDPIRGDPRGISGRLNGTSEMWGHHPQMSHNQLQGINKMVGQSVATASTSVGTSGSGIGPGGPGPSTVSGNIPTQWGPAQPVSVGVSGPKDMSKQISGWEEPSPPPQRRSIPNYDDGTSLWGQQTRVPAASGHWKDMTDSIGRSSHLMRGQSQTGGIGIAGVGNSNVPVGANPSNPISSVVGPQARIPSVGGVQHKPDGGAMWVHSGNVGGRNNVAAVTTWGDDTHSVNVGAPSSGSVSSNNWVDDKSNSTLAQNSWSDPAPVGVSWGNKQSKPPSNSASSGWSTAAGVVDGVDLGSEWNTHGGIIGKSQQQQKLAGLNVGMVNVINAEIIKQSKQYRILVENGFKKEDVERALVIANMNIEEAADMLRANSSLSMDGWRRHDESLGSYADHNSSTSSGGFAGRYPVNSGQPSMSFPHNNLMNNMGGTAVTGGNNNTNMTALQVQKYLNQGQHGVAVGPQAVGNSSAVSVGFGQNTSNAAVAGAASVNIAANTNNQPSGQQIRMLGQQIQLAIHSGFISSQILTQPLTQTTLNLLNQLLSNIKHLQAAQQSLTRGGNVNPMAVNVAISKYKQQIQNLQNQINAQQAVYVKQQNMQPTSQQQQPQQQQLPSVHLSNSGNDYLRGHDAINNLQSNFSELNINKPSGYQGASNQQSRLNQWKLPVLDKEINSDSTEFSRAPGATKQNLTANTSNINSLGLQNDSTWSTGRSIGDGWPDPSSDNENKDWSVAQPTSAATAYTDLVQEFEPGKPWKGSQIKSIEDDPSITPGSVARSPLSINSTPKDADIFANTGKNSPTDLPPLSLSSSTWSFNPNQNYPSHSWSDNSQQCTATSELWTSPLNKSSSRGPPPGLTANSNKSANSNASTPTTITGGANGWLQPRSGGVQTTNTNWTGGNTTWGSSWLLLKNLTAQIDGPTLRTLCMQHGPLVSFHPYLNQGIALCKYTTREEANKAQMALNNCVLANTTIFAESPSENEVQSIMQHLPQTPSSTSSSGTSGGNVGGVGTSANNANSGSAACLSGNNSGNGNGSASGAGSGNNGNSSCNNSAAGGGSSSNNTITTVANSNLVGSSGSVSNSSGVTANSSTVSVVSCTASGNSINGAGTANSSGSKSSANNLASGQSSASNLTNSTNSTWRQTSQNQALQSQSRPSGREADFDYISLVYSIVDD.

4 disordered regions span residues 1 to 99 (MREA…VWTG), 148 to 227 (NGSS…DPRG), 263 to 335 (TAST…DDGT), and 447 to 501 (VGAP…SGWS). Residues 1–205 (MREALFSQDG…HRGGNGSGAT (205 aa)) form a required for interaction with AGO1 region. Sufficient for miRNA-mediated silencing regions lie at residues 1–605 (MREA…SLGS) and 605–830 (SYAD…SVHL). The segment covering 15-24 (HVNQDTNWEV) has biased composition (polar residues). Residues 150-171 (SSNITGSSGVATGSSGNSSNAG) are compositionally biased toward low complexity. The interval 205 to 490 (TSSDPRDIRM…GVSWGNKQSK (286 aa)) is minimal N-terminal region required for miRNA-mediated silencing. Basic and acidic residues predominate over residues 208-225 (DPRDIRMIDPRDPIRGDP). Polar residues-rich tracts occupy residues 449 to 475 (APSSGSVSSNNWVDDKSNSTLAQNSWS) and 485 to 501 (GNKQSKPPSNSASSGWS). In terms of domain architecture, UBA spans 547–588 (IIKQSKQYRILVENGFKKEDVERALVIANMNIEEAADMLRAN). 7 disordered regions span residues 607–626 (ADHNSSTSSGGFAGRYPVNS), 809–841 (QNMQPTSQQQQPQQQQLPSVHLSNSGNDYLRGH), 889–942 (TEFS…NKDW), 962–1022 (EPGK…LSSS), 1052–1102 (TSPL…GVQT), 1188–1221 (SENEVQSIMQHLPQTPSSTSSSGTSGGNVGGVGT), and 1318–1368 (GTAN…PSGR). Residues 809 to 826 (QNMQPTSQQQQPQQQQLP) show a composition bias toward low complexity. Residues 862 to 1115 (YQGASNQQSR…NWTGGNTTWG (254 aa)) are not required for interaction with AGO1 or miRNAs or for localization to P-bodies but necessary for miRNA-mediated silencing and for interaction with pAbp. Over residues 898-924 (TKQNLTANTSNINSLGLQNDSTWSTGR) the composition is skewed to polar residues. The segment at 940-1215 (KDWSVAQPTS…TSSSGTSGGN (276 aa)) is sufficient for miRNA-mediated silencing. The segment covering 1010 to 1022 (SPTDLPPLSLSSS) has biased composition (low complexity). Polar residues predominate over residues 1052–1061 (TSPLNKSSSR). Residues 1068–1084 (TANSNKSANSNASTPTT) show a composition bias toward low complexity. In terms of domain architecture, RRM spans 1117 to 1189 (SWLLLKNLTA…TTIFAESPSE (73 aa)). Residues 1188–1203 (SENEVQSIMQHLPQTP) are compositionally biased toward polar residues. Positions 1200 to 1384 (PQTPSSTSSS…ISLVYSIVDD (185 aa)) are not required for interaction with AGO1 or miRNAs or for localization to P-bodies but necessary for miRNA-mediated silencing, dissociation from AGO1 and miRNAs and interaction with pAbp. The span at 1211–1220 (TSGGNVGGVG) shows a compositional bias: gly residues. The segment covering 1318–1349 (GTANSSGSKSSANNLASGQSSASNLTNSTNST) has biased composition (low complexity). The segment covering 1350–1365 (WRQTSQNQALQSQSRP) has biased composition (polar residues).

It belongs to the GW182 family. As to quaternary structure, component of the miRNA-directed RNA-induced silencing complex (miRISC), composed of at least AGO1 and gw, which bind mature miRNAs and targets the selective destruction of homologous RNAs. Interacts (via N-terminal region) with AGO1 (via Piwi domain); the interaction is essential for localization of AGO1 in P-bodies and for miRNA-mediated silencing. Interacts with pAbp/PABPC1; this interaction interferes with the binding of pAbp to eIF4G and is required for miRNA-mediated silencing. Interacts with CCR4-NOT complex members Not1, Rga/NOT2, twin/CCR4, Pop2 and NOT3/5 and with PAN complex members CG8232/PAN2 and CG11486/PAN3.

Its subcellular location is the cytoplasm. The protein localises to the P-body. Required for gene silencing mediated by micro-RNAs (miRNAs). Silences both polyadenylated and deadenylated mRNAs. Required for miRNA-mediated translational repression and mRNA decay. Not required for miRNA target recognition. Necessary to initiate but not to maintain silencing. Promotes mRNA deadenylation through the recruitment of the CCR4-NOT and PAN complexes and promotes decapping by the DCP1-DCP2 complex. Dissociates from silenced mRNAs after deadenylation. Required for completion of nuclear divisions during early embryonic development. The protein is Protein Gawky of Drosophila melanogaster (Fruit fly).